We begin with the raw amino-acid sequence, 490 residues long: Betaine aldehyde dehydrogenase (490 aa).

Residues T26 and D93 each contribute to the K(+) site. 150–152 (GAW) serves as a coordination point for NAD(+). K162 (charge relay system) is an active-site residue. Residue 176–179 (KPSE) participates in NAD(+) binding. Position 180 (V180) interacts with K(+). 230–233 (GVAT) contacts NAD(+). K(+) is bound at residue L246. The Proton acceptor role is filled by E252. Residues G254, C286, and E387 each coordinate NAD(+). The Nucleophile role is filled by C286. Cysteine sulfenic acid (-SOH) is present on C286. K457 and G460 together coordinate K(+). E464 (charge relay system) is an active-site residue.

The protein belongs to the aldehyde dehydrogenase family. Dimer of dimers. The cofactor is K(+).

It carries out the reaction betaine aldehyde + NAD(+) + H2O = glycine betaine + NADH + 2 H(+). It functions in the pathway amine and polyamine biosynthesis; betaine biosynthesis via choline pathway; betaine from betaine aldehyde: step 1/1. Involved in the biosynthesis of the osmoprotectant glycine betaine. Catalyzes the irreversible oxidation of betaine aldehyde to the corresponding acid. This Stenotrophomonas maltophilia (strain K279a) protein is Betaine aldehyde dehydrogenase.